The chain runs to 904 residues: HTH-type transcriptional regulator MalT (904 aa).

39–46 is a binding site for ATP; that stretch reads CPAGYGKT. An HTH luxR-type domain is found at 832–897; it reads ELIRTSPLTQ…EAVQQAQQLL (66 aa). A DNA-binding region (H-T-H motif) is located at residues 856-875; it reads NDQIAGELAVAATTIKTHIR.

This sequence belongs to the MalT family. As to quaternary structure, monomer in solution. Oligomerizes to an active state in the presence of the positive effectors ATP and maltotriose.

With respect to regulation, activated by ATP and maltotriose, which are both required for DNA binding. Functionally, positively regulates the transcription of the maltose regulon whose gene products are responsible for uptake and catabolism of malto-oligosaccharides. Specifically binds to the promoter region of its target genes, recognizing a short DNA motif called the MalT box. This chain is HTH-type transcriptional regulator MalT, found in Serratia proteamaculans (strain 568).